We begin with the raw amino-acid sequence, 272 residues long: Bis(5'-nucleosyl)-tetraphosphatase, symmetrical (272 aa).

This sequence belongs to the Ap4A hydrolase family.

It catalyses the reaction P(1),P(4)-bis(5'-adenosyl) tetraphosphate + H2O = 2 ADP + 2 H(+). Hydrolyzes diadenosine 5',5'''-P1,P4-tetraphosphate to yield ADP. The polypeptide is Bis(5'-nucleosyl)-tetraphosphatase, symmetrical (Glaesserella parasuis serovar 5 (strain SH0165) (Haemophilus parasuis)).